The sequence spans 457 residues: uncharacterized protein (457 aa).

The region spanning 5 to 63 is the TRAM domain; it reads PVEEGQKFPLTIRRMGINGEGIGYFKKAVVFVPGAITGEEVVVEAVKVRDRFTEAKLNK. [4Fe-4S] cluster-binding residues include cysteine 76, cysteine 82, cysteine 85, and cysteine 166. S-adenosyl-L-methionine contacts are provided by glutamine 290, tyrosine 319, aspartate 340, and aspartate 388. The Nucleophile role is filled by cysteine 415.

This sequence belongs to the class I-like SAM-binding methyltransferase superfamily. RNA M5U methyltransferase family.

This is an uncharacterized protein from Listeria innocua serovar 6a (strain ATCC BAA-680 / CLIP 11262).